The following is a 1190-amino-acid chain: Plakophilin-4 (1190 aa).

Residues 1-32 (MPAPEQGSLVEEGQPQTHQEAVSTGPGMEPET) are disordered. Residues 36–63 (TILASVKEQELQFQRLTRELEVERQIVA) are a coiled coil. The disordered stretch occupies residues 73–347 (AESPSIASTS…KRSGMTAVPQ (275 aa)). Ser75 carries the post-translational modification Phosphoserine. Residues 77–86 (SIASTSSTEK) show a composition bias toward polar residues. Residue Thr84 is modified to Phosphothreonine. Phosphoserine is present on residues Ser106, Ser132, Ser136, and Ser139. Polar residues-rich tracts occupy residues 138–156 (GSLGNSRSSTQMNSYSDSG), 163–203 (FHNS…QPSV), and 213–229 (SVPSRAQSPSYVTSTGV). Residues Ser220, Ser230, and Ser235 each carry the phosphoserine modification. Residues 230 to 241 (SPSRGSLRTSLG) are compositionally biased toward low complexity. Residues 247–266 (PSVTDSRPLNPSAYSSSTLP) are compositionally biased toward polar residues. Omega-N-methylarginine occurs at positions 253 and 269. A phosphoserine mark is found at Ser272, Ser280, Ser313, Ser326, and Ser336. Positions 289-323 (SVTSRQTSNPNGPVPQYQTTTRVGSPLTLTDAQTR) are enriched in polar residues. Positions 324-337 (VASPSQGQVGSSSP) are enriched in low complexity. Tyr371 bears the Phosphotyrosine mark. A phosphoserine mark is found at Ser391, Ser402, and Ser405. Thr411 bears the Phosphothreonine mark. Tyr414 is subject to Phosphotyrosine. Residues Ser421, Ser426, and Ser437 each carry the phosphoserine modification. Tyr477 carries the phosphotyrosine modification. Phosphoserine occurs at positions 509, 511, and 514. ARM repeat units follow at residues 517 to 556 (KDPREFAWRDPELPEVIHMLQHQFPSVQANAAAYLQHLCF), 559 to 598 (NKVKMEVYRLGGIKHLVDLLDHRVLEVQKNACGALRNLVF), and 603 to 643 (DENK…NLSS). Residues 772–781 (GKESPSKDSE) are compositionally biased toward basic and acidic residues. The segment at 772-809 (GKESPSKDSEPSCWGKKKKKKKRTPQEDQWDGVGPIPG) is disordered. Ser775 bears the Phosphoserine mark. An ARM 4 repeat occupies 861–900 (AYIRAAVRKEKGLPILVELLRMDNDRVVSSVATALRNMAL). Phosphothreonine is present on residues Thr1012 and Thr1016. Phosphoserine occurs at positions 1044, 1090, 1099, and 1133.

This sequence belongs to the beta-catenin family. In terms of assembly, interacts (via the C-terminus) with FRMPD2 (via the PDZ 2 domain). Interacts with PDZD2. Interacts with RHOA; the interaction is detected at the midbody. Interacts with ECT2; the interaction is detected at the midbody. Interacts with CCDC85B.

The protein resides in the cell junction. Its subcellular location is the desmosome. It localises to the cytoplasm. The protein localises to the cytoskeleton. It is found in the spindle. The protein resides in the spindle pole. Its subcellular location is the midbody. It localises to the cell membrane. Functionally, plays a role as a regulator of Rho activity during cytokinesis. May play a role in junctional plaques. The protein is Plakophilin-4 (Pkp4) of Mus musculus (Mouse).